A 437-amino-acid chain; its full sequence is GTPase Era, mitochondrial (437 aa).

The transit peptide at 1-43 (MAASSWRGAVLLRTVSGLWQAGPDAAREWMTRLPSLLGFQQRC) directs the protein to the mitochondrion. The Era-type G domain maps to 112 to 330 (RVLRVVLLGA…QYLLAQARPG (219 aa)). Residues 120-127 (GAPNAGKS) form a G1 region. GTP is bound at residue 120 to 127 (GAPNAGKS). Residues 146-150 (HTTRS) are G2. The tract at residues 167-170 (DTPG) is G3. 167–171 (DTPGL) lines the GTP pocket. At Ser-173 the chain carries Phosphoserine. Residue 236-239 (NKVD) participates in GTP binding. The interval 236–239 (NKVD) is G4. The segment at 264–296 (LKTKQALRSRPDTHCPSPAAQGPNPQPVRDPQQ) is disordered. The segment at 308-310 (LSA) is G5. Positions 360-437 (LPEEVPYNVQ…QLRLSVKLLK (78 aa)) constitute a KH type-2 domain.

Belongs to the TRAFAC class TrmE-Era-EngA-EngB-Septin-like GTPase superfamily. Era GTPase family.

It is found in the mitochondrion matrix. The protein resides in the mitochondrion inner membrane. Its function is as follows. Probable GTPase that plays a role in the mitochondrial ribosomal small subunit assembly. Specifically binds the 12S mitochondrial rRNA (12S mt-rRNA) to a 33 nucleotide section delineating the 3' terminal stem-loop region. May act as a chaperone that protects the 12S mt-rRNA on the 28S mitoribosomal subunit during ribosomal small subunit assembly. This Bos taurus (Bovine) protein is GTPase Era, mitochondrial (ERAL1).